The primary structure comprises 172 residues: MSANSKDRNQSNQDAKRQQQNFPKKISEGEADLYLDQYNFTTTAAIVSSVDRKIFVLLRDGRMLFGVLRTFDQYANLILQDCVERIYFSEENKYAEEDRGIFMIRGENVVMLGEVDIDKEDQPLEAMERIPFKEAWLTKQKNDEKRFKEETHKGKKMARHGIVYDFHKSDMY.

Residues 1-17 (MSANSKDRNQSNQDAKR) show a composition bias toward basic and acidic residues. The interval 1-22 (MSANSKDRNQSNQDAKRQQQNF) is disordered. In terms of domain architecture, Sm spans 41 to 118 (TTTAAIVSSV…VVMLGEVDID (78 aa)).

This sequence belongs to the snRNP Sm proteins family. Component of the heptameric LSM1-LSM7 complex that forms a seven-membered ring structure with a donut shape. The LSm subunits are arranged in the order LSM1, LSM2, LSM3, LSM6, LSM5, LSM7 and LSM4. Except for LSM1, where a C-terminal helix crosses the ring structure to form additional interactions with LSM3 and LSM6, each subunit interacts only with its two neighboring subunits. The LSM1-LSM7 complex interacts with PAT1; within the complex PAT1 has direct interactions with LSM2 and LSM3. The LSM1-LSM7 complex interacts with XRN1.

It is found in the nucleus. It localises to the cytoplasm. The protein localises to the P-body. Functionally, component of the cytoplasmic LSM1-LSM7 complex which is involved in mRNA degradation by activating the decapping step. Together with PAT1, the LSM1-LSM7 complex binds to osmotic stress-activated mRNAs to attenuate the osmotic stress response, probably by limiting ribosome access to the mRNA and consequently translation. This chain is LSM1-LSM7 complex subunit LSM1 (LSM1), found in Saccharomyces cerevisiae (strain ATCC 204508 / S288c) (Baker's yeast).